The following is a 133-amino-acid chain: Putative pre-16S rRNA nuclease (133 aa).

This sequence belongs to the YqgF nuclease family.

The protein localises to the cytoplasm. Its function is as follows. Could be a nuclease involved in processing of the 5'-end of pre-16S rRNA. In Bordetella bronchiseptica (strain ATCC BAA-588 / NCTC 13252 / RB50) (Alcaligenes bronchisepticus), this protein is Putative pre-16S rRNA nuclease.